A 472-amino-acid polypeptide reads, in one-letter code: Alanine--anticapsin ligase (472 aa).

E109 serves as a coordination point for Mg(2+). Positions 138 and 178 each coordinate ATP. The ATP-grasp domain maps to 142 to 355; sequence RDAFNKAGVK…MAQLLLDVLC (214 aa). L182 provides a ligand contact to Mg(2+). ATP-binding positions include 184–185, 226–229, and Q268; these read SS and EEFL. Substrate-binding positions include E273 and 309 to 311; that span reads HTE. 2 residues coordinate Mg(2+): E311 and E324. 328–331 lines the substrate pocket; it reads RFAG.

Monomer or homodimer. Mg(2+) is required as a cofactor.

It carries out the reaction L-anticapsin + L-alanine + ATP = bacilysin + ADP + phosphate + H(+). The protein operates within antibiotic biosynthesis; bacilysin biosynthesis. In terms of biological role, part of the bacABCDEFG operon responsible for the biosynthesis of bacilysin, an irreversible inactivator of the glutaminase domain of glucosamine synthetase. Catalyzes the formation of alpha-dipeptides from various L-amino acids in the presence of ATP. In vivo catalyzes the ligation of L-alanine and L-anticapsin (epoxycyclohexanonyl-Ala) to produce the final bacilysin antibiotic (L-Ala-L-4S-cyclohexenonyl-Ala dipeptide). The substrate specificity is restricted to small amino acids such as L-Ala, for the N-terminal end of the dipeptide, whereas a wide range of hydrophobic amino acids such as L-Phe, L-Tyr and L-Met are recognized for the C-terminal end. This is Alanine--anticapsin ligase from Bacillus subtilis (strain 168).